The chain runs to 359 residues: MKSVRSFIRNDILAMSAYKITDVPPGFAKLDAMESPAHPFEGHEALMREWRAQLASAPIHLYPNPSGCGLQEALRSAFDIPDCAAVALGNGSDELIQFITMLTAKPGAAMLAAEPGFIMYRHNAALYGMDYVGVPLNGDFTLNLPAVLEAVRKHRPALTFIAYPNNPTGVCFTRAEIEAAIEASDGIVVVDEAYGAFNGDSFLPQAGRIPNLIVLRTLSKIGFAGLRIGYATGCPEVIGELQKILPPYNMNQLSLTTAKLALQHYGIISANIDSLKNERERMFAELGKICRLNAFPSQANFITIRVPDADLLFDTLKQNRILVKKLHGAHPLLEHCLRITIGSSAQNDAVLDVIRRLYR.

At lysine 220 the chain carries N6-(pyridoxal phosphate)lysine.

This sequence belongs to the class-II pyridoxal-phosphate-dependent aminotransferase family. Histidinol-phosphate aminotransferase subfamily. Homodimer. The cofactor is pyridoxal 5'-phosphate.

It catalyses the reaction L-histidinol phosphate + 2-oxoglutarate = 3-(imidazol-4-yl)-2-oxopropyl phosphate + L-glutamate. The protein operates within amino-acid biosynthesis; L-histidine biosynthesis; L-histidine from 5-phospho-alpha-D-ribose 1-diphosphate: step 7/9. This Neisseria gonorrhoeae (strain ATCC 700825 / FA 1090) protein is Histidinol-phosphate aminotransferase.